Consider the following 176-residue polypeptide: T cell receptor beta constant 1 (176 aa).

The 110-residue stretch at 8–117 folds into the Ig-like C1-type domain; it reads PEVAVFEPSE…WTQDRAKPVT (110 aa). Cys-30 and Cys-95 are joined by a disulfide. Residue Asn-69 is glycosylated (N-linked (GlcNAc...) asparagine). The segment at 130-144 is connecting peptide; sequence CGFTSVSYQQGVLSA. A helical transmembrane segment spans residues 150 to 170; sequence ILLGKATLYAVLVSALVLMAM. The Cytoplasmic portion of the chain corresponds to 171–176; the sequence is VKRKDF.

In terms of assembly, alpha-beta TR is a heterodimer composed of an alpha and beta chain; disulfide-linked. The alpha-beta TR is associated with the transmembrane signaling CD3 coreceptor proteins to form the TR-CD3 (TcR or TCR). The assembly of alpha-beta TR heterodimers with CD3 occurs in the endoplasmic reticulum where a single alpha-beta TR heterodimer associates with one CD3D-CD3E heterodimer, one CD3G-CD3E heterodimer and one CD247 homodimer forming a stable octameric structure. CD3D-CD3E and CD3G-CD3E heterodimers preferentially associate with TR alpha and TR beta chains, respectively. The association of the CD247 homodimer is the last step of TcR assembly in the endoplasmic reticulum and is required for transport to the cell surface.

It localises to the cell membrane. In terms of biological role, constant region of T cell receptor (TR) beta chain. Alpha-beta T cell receptors are antigen specific receptors which are essential to the immune response and are present on the cell surface of T lymphocytes. Recognize peptide-major histocompatibility (MH) (pMH) complexes that are displayed by antigen presenting cells (APC), a prerequisite for efficient T cell adaptive immunity against pathogens. Binding of alpha-beta TR to pMH complex initiates TR-CD3 clustering on the cell surface and intracellular activation of LCK that phosphorylates the ITAM motifs of CD3G, CD3D, CD3E and CD247 enabling the recruitment of ZAP70. In turn, ZAP70 phosphorylates LAT, which recruits numerous signaling molecules to form the LAT signalosome. The LAT signalosome propagates signal branching to three major signaling pathways, the calcium, the mitogen-activated protein kinase (MAPK) kinase and the nuclear factor NF-kappa-B (NF-kB) pathways, leading to the mobilization of transcription factors that are critical for gene expression and essential for T cell growth and differentiation. The T cell repertoire is generated in the thymus, by V-(D)-J rearrangement. This repertoire is then shaped by intrathymic selection events to generate a peripheral T cell pool of self-MH restricted, non-autoaggressive T cells. Post-thymic interaction of alpha-beta TR with the pMH complexes shapes TR structural and functional avidity. The sequence is that of T cell receptor beta constant 1 from Homo sapiens (Human).